A 156-amino-acid chain; its full sequence is Succinate dehydrogenase assembly factor 2-B, mitochondrial (156 aa).

Residues 1–24 (MLRQFIVSTVGRRLQLPMMAQSRL) constitute a mitochondrion transit peptide.

It belongs to the SDHAF2 family. In terms of assembly, interacts with the flavoprotein subunit within the SDH catalytic dimer.

It is found in the mitochondrion matrix. Functionally, plays an essential role in the assembly of succinate dehydrogenase (SDH), an enzyme complex (also referred to as respiratory complex II) that is a component of both the tricarboxylic acid (TCA) cycle and the mitochondrial electron transport chain, and which couples the oxidation of succinate to fumarate with the reduction of ubiquinone (coenzyme Q) to ubiquinol. Required for flavinylation (covalent attachment of FAD) of the flavoprotein subunit of the SDH catalytic dimer. The protein is Succinate dehydrogenase assembly factor 2-B, mitochondrial of Drosophila melanogaster (Fruit fly).